The following is a 395-amino-acid chain: Tyrosine--tRNA ligase 2 (395 aa).

The 'HIGH' region signature appears at 42–51; the sequence is PTAPDIHLGH. Positions 226–230 match the 'KMSKS' region motif; sequence KMSKS. K229 is a binding site for ATP. The region spanning 334 to 395 is the S4 RNA-binding domain; it reads TPMANLLKEA…KRKFARITIA (62 aa).

It belongs to the class-I aminoacyl-tRNA synthetase family. TyrS type 2 subfamily. Homodimer.

It is found in the cytoplasm. It carries out the reaction tRNA(Tyr) + L-tyrosine + ATP = L-tyrosyl-tRNA(Tyr) + AMP + diphosphate + H(+). Functionally, catalyzes the attachment of tyrosine to tRNA(Tyr) in a two-step reaction: tyrosine is first activated by ATP to form Tyr-AMP and then transferred to the acceptor end of tRNA(Tyr). In Vibrio vulnificus (strain CMCP6), this protein is Tyrosine--tRNA ligase 2.